The chain runs to 550 residues: PAB1-binding protein 1 (550 aa).

A Sm domain is found at 11–95 (RLEYLYLNLV…IVMIEVQNAK (85 aa)). Disordered regions lie at residues 201-296 (HDDE…HKRM) and 441-550 (GMGN…RVGK). Residues 214-223 (DVHRPQEKKP) are compositionally biased toward basic and acidic residues. Residues 244 to 262 (AAAAPATAPTTAPAAAPAP) are compositionally biased toward low complexity. A compositionally biased stretch (pro residues) spans 263–281 (AAAPPAAAPAAAAPPPPPA).

It belongs to the ataxin-2 family. Forms a complex composed of at least MKT1, PBP1, XAC1 and LSM12. Forms a complex composed of at least MKT1L, PBP1, XAC1 and LSM12. Within the complex, interacts with MKT1 (via C-terminus); the interaction is direct. Interacts (via C-terminus) with ZC3H11; the interaction is direct.

The protein localises to the cytoplasm. The protein resides in the cytosol. It localises to the stress granule. Involved in post-transcriptional regulation of gene expression. Promotes mRNA stabilization by bridging poly(A)-binding protein to mRNAs. The protein is PAB1-binding protein 1 of Trypanosoma brucei brucei (strain 927/4 GUTat10.1).